A 236-amino-acid chain; its full sequence is Small ribosomal subunit protein uS3 (236 aa).

One can recognise a KH type-2 domain in the interval Ile-39–Arg-107. The tract at residues Ala-214–Gly-236 is disordered.

It belongs to the universal ribosomal protein uS3 family. Part of the 30S ribosomal subunit. Forms a tight complex with proteins S10 and S14.

In terms of biological role, binds the lower part of the 30S subunit head. Binds mRNA in the 70S ribosome, positioning it for translation. This chain is Small ribosomal subunit protein uS3, found in Parvibaculum lavamentivorans (strain DS-1 / DSM 13023 / NCIMB 13966).